A 295-amino-acid polypeptide reads, in one-letter code: Elongation factor Ts (295 aa).

An involved in Mg(2+) ion dislocation from EF-Tu region spans residues 79–82 (TDFV).

Belongs to the EF-Ts family.

It is found in the cytoplasm. Associates with the EF-Tu.GDP complex and induces the exchange of GDP to GTP. It remains bound to the aminoacyl-tRNA.EF-Tu.GTP complex up to the GTP hydrolysis stage on the ribosome. In Mycoplasma mycoides subsp. mycoides SC (strain CCUG 32753 / NCTC 10114 / PG1), this protein is Elongation factor Ts.